Here is a 141-residue protein sequence, read N- to C-terminus: NADH-quinone oxidoreductase subunit A (141 aa).

3 helical membrane passes run 24 to 44 (LLALALYVALACIIVVSLLLA), 77 to 97 (VPFYLTAIFFVVFDVEVAFIA), and 106 to 126 (LGWAGLAQIAFFIITLLVALI).

This sequence belongs to the complex I subunit 3 family. NDH-1 is composed of 14 different subunits. Subunits NuoA, H, J, K, L, M, N constitute the membrane sector of the complex.

The protein localises to the cell inner membrane. It catalyses the reaction a quinone + NADH + 5 H(+)(in) = a quinol + NAD(+) + 4 H(+)(out). Its function is as follows. NDH-1 shuttles electrons from NADH, via FMN and iron-sulfur (Fe-S) centers, to quinones in the respiratory chain. The immediate electron acceptor for the enzyme in this species is believed to be ubiquinone. Couples the redox reaction to proton translocation (for every two electrons transferred, four hydrogen ions are translocated across the cytoplasmic membrane), and thus conserves the redox energy in a proton gradient. This Syntrophotalea carbinolica (strain DSM 2380 / NBRC 103641 / GraBd1) (Pelobacter carbinolicus) protein is NADH-quinone oxidoreductase subunit A.